The sequence spans 160 residues: uncharacterized protein (160 aa).

Positions 26, 28, 50, and 61 each coordinate Zn(2+). The GRF-type; atypical zinc finger occupies 26–69 (CWCGEEIITFTSKTKENPYRRFYRCAIAMKRENEEHLFKWVDEA).

This is an uncharacterized protein from Arabidopsis thaliana (Mouse-ear cress).